Here is a 161-residue protein sequence, read N- to C-terminus: NADH-quinone oxidoreductase subunit I (161 aa).

2 consecutive 4Fe-4S ferredoxin-type domains span residues 52–82 (LRRYPNGEERCIACKLCEAICPAMAITIESE) and 92–121 (SRYDIDLTKCIFCGFCEEACPVDAVVETRV). 8 residues coordinate [4Fe-4S] cluster: Cys-62, Cys-65, Cys-68, Cys-72, Cys-101, Cys-104, Cys-107, and Cys-111.

This sequence belongs to the complex I 23 kDa subunit family. In terms of assembly, NDH-1 is composed of 14 different subunits. Subunits NuoA, H, J, K, L, M, N constitute the membrane sector of the complex. It depends on [4Fe-4S] cluster as a cofactor.

It localises to the cell inner membrane. The catalysed reaction is a quinone + NADH + 5 H(+)(in) = a quinol + NAD(+) + 4 H(+)(out). Functionally, NDH-1 shuttles electrons from NADH, via FMN and iron-sulfur (Fe-S) centers, to quinones in the respiratory chain. The immediate electron acceptor for the enzyme in this species is believed to be ubiquinone. Couples the redox reaction to proton translocation (for every two electrons transferred, four hydrogen ions are translocated across the cytoplasmic membrane), and thus conserves the redox energy in a proton gradient. The chain is NADH-quinone oxidoreductase subunit I from Azoarcus sp. (strain BH72).